The sequence spans 260 residues: Cytochrome c oxidase subunit 2 (260 aa).

Topologically, residues 1–41 (MIVREWLFFTMAPCDAAEPWQLGFQDAATPMMQGIIDLHHD) are mitochondrial intermembrane. A helical membrane pass occupies residues 42–58 (IFFFLILILVFVSWILV). The Mitochondrial matrix portion of the chain corresponds to 59 to 82 (RALWHFHYKKNPIPQRIVHGTTIE). Residues 83-104 (IIRTIFPSIILMFIAIPSFALL) traverse the membrane as a helical segment. Topologically, residues 105 to 260 (YSMDEVVVDP…NQLIPQTGEA (156 aa)) are mitochondrial intermembrane. Cu cation-binding residues include histidine 187, cysteine 222, glutamate 224, cysteine 226, histidine 230, and methionine 233. Mg(2+) is bound at residue glutamate 224.

Belongs to the cytochrome c oxidase subunit 2 family. Component of the cytochrome c oxidase (complex IV, CIV), a multisubunit enzyme composed of a catalytic core of 3 subunits and several supernumerary subunits. The complex exists as a monomer or a dimer and forms supercomplexes (SCs) in the inner mitochondrial membrane with ubiquinol-cytochrome c oxidoreductase (cytochrome b-c1 complex, complex III, CIII). Cu cation is required as a cofactor.

Its subcellular location is the mitochondrion inner membrane. The catalysed reaction is 4 Fe(II)-[cytochrome c] + O2 + 8 H(+)(in) = 4 Fe(III)-[cytochrome c] + 2 H2O + 4 H(+)(out). Functionally, component of the cytochrome c oxidase, the last enzyme in the mitochondrial electron transport chain which drives oxidative phosphorylation. The respiratory chain contains 3 multisubunit complexes succinate dehydrogenase (complex II, CII), ubiquinol-cytochrome c oxidoreductase (cytochrome b-c1 complex, complex III, CIII) and cytochrome c oxidase (complex IV, CIV), that cooperate to transfer electrons derived from NADH and succinate to molecular oxygen, creating an electrochemical gradient over the inner membrane that drives transmembrane transport and the ATP synthase. Cytochrome c oxidase is the component of the respiratory chain that catalyzes the reduction of oxygen to water. Electrons originating from reduced cytochrome c in the intermembrane space (IMS) are transferred via the dinuclear copper A center (CU(A)) of subunit 2 and heme A of subunit 1 to the active site in subunit 1, a binuclear center (BNC) formed by heme A3 and copper B (CU(B)). The BNC reduces molecular oxygen to 2 water molecules using 4 electrons from cytochrome c in the IMS and 4 protons from the mitochondrial matrix. The protein is Cytochrome c oxidase subunit 2 (COX2) of Beta vulgaris (Sugar beet).